The primary structure comprises 160 residues: UPF0178 protein PLES_56411 (160 aa).

It belongs to the UPF0178 family.

The protein is UPF0178 protein PLES_56411 of Pseudomonas aeruginosa (strain LESB58).